We begin with the raw amino-acid sequence, 255 residues long: Putative mediator of RNA polymerase II transcription subunit 30 (255 aa).

Low complexity predominate over residues 58–107 (QSQQLQQPQSIPSSTNNSTNTNTNNSTTTTTTSSTSSTTTPTTTTSTTSP). Disordered stretches follow at residues 58-133 (QSQQ…TLNL) and 177-207 (NIDN…IEKQ). A compositionally biased stretch (polar residues) spans 108–133 (LNSKDSTATTTTKEQPSSPTLPTLNL). The span at 177–189 (NIDNDDTIMKDDN) shows a compositional bias: basic and acidic residues. Positions 190-201 (NNSSTSAPTTTT) are enriched in low complexity.

The protein belongs to the Mediator complex subunit 30 family. Highly divergent. In terms of assembly, component of the Mediator complex.

Its subcellular location is the nucleus. Its function is as follows. Component of the Mediator complex, a coactivator involved in the regulated transcription of nearly all RNA polymerase II-dependent genes. Mediator functions as a bridge to convey information from gene-specific regulatory proteins to the basal RNA polymerase II transcription machinery. Mediator is recruited to promoters by direct interactions with regulatory proteins and serves as a scaffold for the assembly of a functional preinitiation complex with RNA polymerase II and the general transcription factors. In Dictyostelium discoideum (Social amoeba), this protein is Putative mediator of RNA polymerase II transcription subunit 30 (med30).